An 85-amino-acid polypeptide reads, in one-letter code: Large ribosomal subunit protein bL27 (85 aa).

Residues 1–21 (MAHKKGVGSSRNGRDSDGQRL) are disordered.

This sequence belongs to the bacterial ribosomal protein bL27 family.

This Geobacter sp. (strain M21) protein is Large ribosomal subunit protein bL27.